Reading from the N-terminus, the 195-residue chain is Glycerol-3-phosphate acyltransferase (195 aa).

A run of 5 helical transmembrane segments spans residues F3–L23, L52–Q72, I80–F100, L113–L133, and L147–I167.

The protein belongs to the PlsY family. In terms of assembly, probably interacts with PlsX.

It localises to the cell inner membrane. The catalysed reaction is an acyl phosphate + sn-glycerol 3-phosphate = a 1-acyl-sn-glycero-3-phosphate + phosphate. It participates in lipid metabolism; phospholipid metabolism. Its function is as follows. Catalyzes the transfer of an acyl group from acyl-phosphate (acyl-PO(4)) to glycerol-3-phosphate (G3P) to form lysophosphatidic acid (LPA). This enzyme utilizes acyl-phosphate as fatty acyl donor, but not acyl-CoA or acyl-ACP. The protein is Glycerol-3-phosphate acyltransferase of Ehrlichia ruminantium (strain Gardel).